Here is a 356-residue protein sequence, read N- to C-terminus: Tyrosine recombinase XerS (356 aa).

A Core-binding (CB) domain is found at 16-121; that stretch reads IMPWYVLDYY…ALSSLYKYLT (106 aa). The 186-residue stretch at 169–354 folds into the Tyr recombinase domain; sequence AFLDYVDKEY…VNDEQKNALD (186 aa). Residues R210, K234, H306, R309, and H332 contribute to the active site. The O-(3'-phospho-DNA)-tyrosine intermediate role is filled by Y341.

It belongs to the 'phage' integrase family. XerS subfamily.

The protein resides in the cytoplasm. FtsK is required for recombination. In terms of biological role, site-specific tyrosine recombinase, which acts by catalyzing the cutting and rejoining of the recombining DNA molecules. Essential to convert dimers of the bacterial chromosome into monomers to permit their segregation at cell division. This chain is Tyrosine recombinase XerS, found in Streptococcus equi subsp. zooepidemicus (strain H70).